A 24-amino-acid polypeptide reads, in one-letter code: Humanin-like 13 (24 aa).

This sequence belongs to the humanin family.

The protein resides in the secreted. Its subcellular location is the cytoplasm. Its function is as follows. Plays a role as a neuroprotective and antiapoptotic factor. This chain is Humanin-like 13, found in Homo sapiens (Human).